Reading from the N-terminus, the 496-residue chain is Beta-amylase (496 aa).

Positions 54, 94, and 102 each coordinate substrate. The active-site Proton donor is the glutamate 187. Residues lysine 296, histidine 301, and threonine 343 each coordinate substrate. Glutamate 381 serves as the catalytic Proton acceptor. Substrate contacts are provided by residues 382-383 (NA) and arginine 421. Residues 455–496 (YNHGIPPLKRSGPKIPDDVLNEATKPIPPFPWDSETDMKVDG) are disordered.

This sequence belongs to the glycosyl hydrolase 14 family.

It catalyses the reaction Hydrolysis of (1-&gt;4)-alpha-D-glucosidic linkages in polysaccharides so as to remove successive maltose units from the non-reducing ends of the chains.. In Medicago sativa (Alfalfa), this protein is Beta-amylase (BMY1).